The primary structure comprises 319 residues: Acetyl esterase (319 aa).

An Involved in the stabilization of the negatively charged intermediate by the formation of the oxyanion hole motif is present at residues 91–93 (HGG). Residues S165, D262, and H292 contribute to the active site.

It belongs to the 'GDXG' lipolytic enzyme family. As to quaternary structure, homodimer. Interacts with MalT and MelA.

Its subcellular location is the cytoplasm. Displays esterase activity towards short chain fatty esters (acyl chain length of up to 8 carbons). Able to hydrolyze triacetylglycerol (triacetin) and tributyrylglycerol (tributyrin), but not trioleylglycerol (triolein) or cholesterol oleate. Negatively regulates MalT activity by antagonizing maltotriose binding. Inhibits MelA galactosidase activity. The sequence is that of Acetyl esterase from Shigella boydii serotype 4 (strain Sb227).